The primary structure comprises 359 residues: Lipopolysaccharide 1,6-galactosyltransferase (359 aa).

UDP is bound by residues Gln242 and Glu274.

This sequence belongs to the glycosyltransferase group 1 family. Glycosyltransferase 4 subfamily.

It catalyses the reaction alpha-D-Glc-(1-&gt;3)-[L-alpha-D-Hep-(1-&gt;7)]-4-O-PO3(2-)-L-alpha-D-Hep-(1-&gt;3)-4-O-PO3(2-)-L-alpha-D-Hep-(1-&gt;5)-[alpha-Kdo-(2-&gt;4)]-alpha-Kdo-(2-&gt;6)-lipid A + UDP-alpha-D-galactose = alpha-D-Gal-(1-&gt;6)-alpha-D-Glc-(1-&gt;3)-[L-alpha-D-Hep-(1-&gt;7)]-4-O-PO3(2-)-L-alpha-D-Hep-(1-&gt;3)-4-O-PO3(2-)-L-alpha-D-Hep-(1-&gt;5)-[alpha-Kdo-(2-&gt;4)]-alpha-Kdo-(2-&gt;6)-lipid A + UDP + H(+). The protein operates within bacterial outer membrane biogenesis; LPS core biosynthesis. Galactosyltransferase involved in the biosynthesis of the core oligosaccharide region of lipopolysaccharide (LPS). Catalyzes the addition of galactose from UDP-galactose to the first glucose residue of the LPS outer core. Cannot use other sugar donors, such as UDP-glucose, UDP-glucuronic acid, UDP-galacuronic acid, GDP-mannose, ADP-glucose and GDP-glucose. In the absence of a lipid acceptor, can hydrolyze UDP-galactose to UDP and galactose. The protein is Lipopolysaccharide 1,6-galactosyltransferase of Escherichia coli (strain K12).